The sequence spans 53 residues: Small, acid-soluble spore protein K (53 aa).

The disordered stretch occupies residues 1 to 53 (MRNKERNFPNQNNNKFEGEPRAKAEYASKRANGTTNTHPQERMHASGKRDDNF). Composition is skewed to basic and acidic residues over residues 16-28 (FEGEPRAKAEYAS) and 39-53 (PQERMHASGKRDDNF).

Belongs to the SspK family.

Its subcellular location is the spore core. This chain is Small, acid-soluble spore protein K, found in Geobacillus sp. (strain WCH70).